The chain runs to 70 residues: MPGILVRPDQSFEEAYRLFKKQVDRNLIVTEARARRFYEKPTERRKKEKIAARKKMLKRLYMLRRYESRL.

Belongs to the bacterial ribosomal protein bS21 family.

The sequence is that of Small ribosomal subunit protein bS21 from Nitratiruptor sp. (strain SB155-2).